The following is a 461-amino-acid chain: Bifunctional protein HldE (461 aa).

A ribokinase region spans residues 1-312 (MLEFLSQQKP…IRSFKSMSFE (312 aa)). Position 191–194 (191–194 (NKKE)) interacts with ATP. D259 is an active-site residue. Positions 334 to 461 (FTNGCFDIVH…KIIEKIKDKK (128 aa)) are cytidylyltransferase.

The protein in the N-terminal section; belongs to the carbohydrate kinase PfkB family. In the C-terminal section; belongs to the cytidylyltransferase family. In terms of assembly, homodimer.

It carries out the reaction D-glycero-beta-D-manno-heptose 7-phosphate + ATP = D-glycero-beta-D-manno-heptose 1,7-bisphosphate + ADP + H(+). It catalyses the reaction D-glycero-beta-D-manno-heptose 1-phosphate + ATP + H(+) = ADP-D-glycero-beta-D-manno-heptose + diphosphate. It participates in nucleotide-sugar biosynthesis; ADP-L-glycero-beta-D-manno-heptose biosynthesis; ADP-L-glycero-beta-D-manno-heptose from D-glycero-beta-D-manno-heptose 7-phosphate: step 1/4. The protein operates within nucleotide-sugar biosynthesis; ADP-L-glycero-beta-D-manno-heptose biosynthesis; ADP-L-glycero-beta-D-manno-heptose from D-glycero-beta-D-manno-heptose 7-phosphate: step 3/4. In terms of biological role, catalyzes the phosphorylation of D-glycero-D-manno-heptose 7-phosphate at the C-1 position to selectively form D-glycero-beta-D-manno-heptose-1,7-bisphosphate. Catalyzes the ADP transfer from ATP to D-glycero-beta-D-manno-heptose 1-phosphate, yielding ADP-D-glycero-beta-D-manno-heptose. This Campylobacter jejuni (strain RM1221) protein is Bifunctional protein HldE.